A 554-amino-acid chain; its full sequence is Glucose-6-phosphate isomerase (554 aa).

The active-site Proton donor is glutamate 359. Catalysis depends on residues histidine 390 and lysine 518.

Belongs to the GPI family.

It localises to the cytoplasm. It carries out the reaction alpha-D-glucose 6-phosphate = beta-D-fructose 6-phosphate. It participates in carbohydrate biosynthesis; gluconeogenesis. The protein operates within carbohydrate degradation; glycolysis; D-glyceraldehyde 3-phosphate and glycerone phosphate from D-glucose: step 2/4. Functionally, catalyzes the reversible isomerization of glucose-6-phosphate to fructose-6-phosphate. This Ectopseudomonas mendocina (strain ymp) (Pseudomonas mendocina) protein is Glucose-6-phosphate isomerase.